Here is a 1493-residue protein sequence, read N- to C-terminus: Protein RNA-directed DNA methylation 3 (1493 aa).

2 disordered regions span residues 1–34 (MDRK…EGLR) and 54–96 (GYYG…SSFV). Residues 21–28 (KRKNSVEF) carry the Nuclear localization signal motif. Basic and acidic residues predominate over residues 24–34 (NSVEFRDEGLR). The span at 60 to 80 (SDEDDDGLGFLNDMEDEPEVE) shows a compositional bias: acidic residues. A compositionally biased stretch (basic and acidic residues) spans 81-92 (ESSKAGKGEKGK). Positions 239–266 (KVSEGTWARVKNGKYKGDLAQIVAVSDT) constitute a KOW 1 domain. The tract at residues 393–432 (PTCREGGKGEGSGGGKGEGSGGGKGEGSRGGKGEGSSDFK) is disordered. The span at 401 to 417 (GEGSGGGKGEGSGGGKG) shows a compositional bias: gly residues. Positions 418–432 (EGSRGGKGEGSSDFK) are enriched in basic and acidic residues. Residues 501 to 528 (QISVNDVVKISKGPSEGKQGVVRQVYRG) enclose the KOW 2 domain. Residues 578–602 (SSPKSPLSPEKEWQPRERYNSSNQG) are disordered. A compositionally biased stretch (basic and acidic residues) spans 586-596 (PEKEWQPRERY). Positions 607-634 (TYSIGQKLRIRVGPLKGYLCRVIALRYS) constitute a KOW 3 domain. Disordered stretches follow at residues 692–711 (IGAG…PSTD), 728–747 (EKNP…TVAD), and 757–1493 (AAEN…KTGW). Residues 732 to 741 (WGGSKPTSDV) form repeat 1. The segment at 732 to 1493 (WGGSKPTSDV…WGTGDKKTGW (762 aa)) is 42 X 9 AA approximate WG/GW-rich tandem repeats. Over residues 757 to 767 (AAENKPASASD) the composition is skewed to low complexity. A run of 37 repeats spans residues 775–784 (WGKTPASEAG), 789–797 (WGDTSASNV), 818–827 (WGTHGGSSGG), 836–845 (WGKLCEASES), 854–863 (WGKKGGSDGE), 866–875 (WGNKDGNSSA), 883–892 (WGQQDKGSDE), 917–926 (GWNKSAEDSN), 935–943 (WGQPNDGSS), 944–953 (WGKKGDGAAS), 954–962 (WGKKDDGGS), 963–972 (WGKKDDGNKD), 978–987 (WGKKDDGQKD), 1003–1012 (WGKKDDGGSS), 1013–1022 (WGKKDDGGSL), 1023–1032 (WGKKDDGGSS), 1033–1042 (WGKEDDGGSL), 1043–1052 (WGKKDDGESS), 1053–1062 (WGKKDDGESS), 1063–1072 (WGKKDDGGSS), 1073–1082 (WGKKDEGGYS), 1132–1141 (WGKQDGDGGG), 1144–1153 (WGKENDAGGG), 1156–1165 (WGKQDNGVGS), 1167–1176 (WGKQNDGSGG), 1180–1189 (WGKQNDAGGG), 1192–1201 (WGKQDSGGDG), 1204–1213 (WGKQDGGGDS), 1217–1226 (WGKQNNTSGG), 1229–1238 (WGKQSDAGGG), 1241–1250 (WGKQDGGGGG), 1253–1262 (WGKQDGGGGS), 1266–1275 (WGKQNETSNG), 1278–1287 (WGKQNDSGGG), 1290–1299 (WGKQDGGGGG), 1302–1311 (WGKQNDGGGG), and 1314–1323 (WGKQGDGGSK). Positions 790 to 812 (GDTSASNVEASSWEKQGASTSNV) are enriched in polar residues. Residues 846–860 (SQKKEESSWGKKGGS) are compositionally biased toward basic and acidic residues. The span at 866-875 (WGNKDGNSSA) shows a compositional bias: polar residues. The span at 955-1090 (GKKDDGGSWG…YSEQTFDRGG (136 aa)) shows a compositional bias: basic and acidic residues. Low complexity predominate over residues 1122–1134 (PWSKPSGGSSWGK). Residues 1156-1172 (WGKQDNGVGSSWGKQND) are compositionally biased toward polar residues. The span at 1186 to 1213 (AGGGSSWGKQDSGGDGSSWGKQDGGGDS) shows a compositional bias: gly residues. The segment covering 1218 to 1231 (GKQNNTSGGSSWGK) has biased composition (polar residues). The span at 1235 to 1264 (AGGGSSWGKQDGGGGGSSWGKQDGGGGSGS) shows a compositional bias: gly residues. Positions 1270–1283 (NETSNGSSWGKQND) are enriched in polar residues. Over residues 1284–1321 (SGGGSSWGKQDGGGGGSSWGKQNDGGGGSSWGKQGDGG) the composition is skewed to gly residues. Polar residues-rich tracts occupy residues 1366 to 1382 (WKTD…QSGG) and 1392 to 1401 (DSNNSKPSGS). The stretch at 1389 to 1398 (WGEDSNNSKP) is repeat 39. The span at 1416 to 1430 (NSKKETNDKPGDDSK) shows a compositional bias: basic and acidic residues. A compositionally biased stretch (polar residues) spans 1432-1442 (AWGTSNDQVNT). A run of 3 repeats spans residues 1433–1442 (WGTSNDQVNT), 1467–1475 (WGGKTNAVA), and 1484–1493 (WGTGDKKTGW).

As to quaternary structure, interacts with AGO4 via its C-terminal region and with RNA transcripts. Binds chromatin at loci subject to transcriptional silencing downstream of RNA Polymerase V, but independently from the presence of 24-nt siRNA.

It localises to the nucleus. It is found in the nucleoplasm. In terms of biological role, effector of RNA-directed DNA methylation (RdDM) triggered by small interfering RNAs (siRNAs, 24-nt RNAs). Functions as an adapter protein that binds scaffold transcripts generated by polymerase V and recruits AGO4 and AGO4-bound siRNAs to form an RdDM effector complex. Promotes the expression of 24-nt RNAs. Required for the initial establishment of DNA methylation. Together with AGO4, required for transcriptional gene silencing (TGS) by DNA methylation and repressive histone modifications (H3K9me2) of several chromatin loci. The polypeptide is Protein RNA-directed DNA methylation 3 (Arabidopsis thaliana (Mouse-ear cress)).